The following is a 329-amino-acid chain: 4-hydroxythreonine-4-phosphate dehydrogenase (329 aa).

Residues His-136 and Thr-137 each coordinate substrate. A divalent metal cation contacts are provided by His-166, His-211, and His-266. Lys-274, Asn-283, and Arg-292 together coordinate substrate.

It belongs to the PdxA family. In terms of assembly, homodimer. It depends on Zn(2+) as a cofactor. Mg(2+) serves as cofactor. Requires Co(2+) as cofactor.

The protein resides in the cytoplasm. It carries out the reaction 4-(phosphooxy)-L-threonine + NAD(+) = 3-amino-2-oxopropyl phosphate + CO2 + NADH. It participates in cofactor biosynthesis; pyridoxine 5'-phosphate biosynthesis; pyridoxine 5'-phosphate from D-erythrose 4-phosphate: step 4/5. Functionally, catalyzes the NAD(P)-dependent oxidation of 4-(phosphooxy)-L-threonine (HTP) into 2-amino-3-oxo-4-(phosphooxy)butyric acid which spontaneously decarboxylates to form 3-amino-2-oxopropyl phosphate (AHAP). This Neisseria meningitidis serogroup B (strain ATCC BAA-335 / MC58) protein is 4-hydroxythreonine-4-phosphate dehydrogenase.